We begin with the raw amino-acid sequence, 382 residues long: MAHEEKRPWEFSLSLPWELIEEILSRVPPESLLRFKTVSKQWNALFRDKTFINNHKMTFRFILATKSKIYSVSIDPKIVVRELTLDIPGLESHEIPKKLVDCDKLLLCDMEKGVVLWNPWLRHSTWIDQGSNHTRMESYGIGYNNKGSYKIFAFCDRKENHTQRLLTIHDSASDAWKDREPIDNSQGKQIVHNIYTKISGVSLNGNLYLVTYFETTDLVYHLIEINSSSESVVKFCDLPCGTSNFLKDAFVLRVFEGDRFSLLKQCHATKKIEIWVSKYKINNNLDRDVEWIKFMEVSSPNLPDLVDGFDSQPSYFIEDKRLVVCSCNETGRAWIYVFGENKLISKTQIDSVVDLWPSHWTFIPSLVPVPRAQREEPAELQV.

One can recognise an F-box domain in the interval 9-55 (WEFSLSLPWELIEEILSRVPPESLLRFKTVSKQWNALFRDKTFINNH). Kelch repeat units follow at residues 150–196 (KIFA…NIYT) and 334–381 (WIYV…AELQ).

This is F-box/kelch-repeat protein At3g16580 from Arabidopsis thaliana (Mouse-ear cress).